A 361-amino-acid polypeptide reads, in one-letter code: MHKDEDQRLLGAVPLPNDPDRSLRPQVLDDFIGQEAARANLKIFIEAAKARQEALDHVLFVGPPGLGKTTLSQIMAKELGVNFRSTSGPVIAKAGDLAALLTNLEERDVLFIDEIHRLSPAIEEILYPAMEDYQLDLIIGEGPAARSVKIDLAKFTLVAATTRLGLLTTPLRDRFGIPIRLNFYTIEELEYIVQRNARLFSVQISEDGAHEIARRARGTPRIAGRLLRRVCDFALVKRAKKIDRKIADEALSRLEVDHLGLDPLDRRYLLLIAQTFLGGPVGIETIAAALSEPRDAIEDIIEPYLLQQGFIQRTARGRILHQKAWSHLGLCAPASTQKHPQLFDMPDNASRQTVLWDEADD.

The tract at residues 1–21 (MHKDEDQRLLGAVPLPNDPDR) is disordered. The large ATPase domain (RuvB-L) stretch occupies residues 1–184 (MHKDEDQRLL…FGIPIRLNFY (184 aa)). ATP contacts are provided by residues Leu23, Arg24, Gly65, Lys68, Thr69, Thr70, 131-133 (EDY), Arg174, Tyr184, and Arg221. Residue Thr69 coordinates Mg(2+). Residues 185–255 (TIEELEYIVQ…IADEALSRLE (71 aa)) are small ATPAse domain (RuvB-S). Positions 258–361 (HLGLDPLDRR…QTVLWDEADD (104 aa)) are head domain (RuvB-H). The DNA site is built by Arg294, Arg313, and Arg318.

Belongs to the RuvB family. As to quaternary structure, homohexamer. Forms an RuvA(8)-RuvB(12)-Holliday junction (HJ) complex. HJ DNA is sandwiched between 2 RuvA tetramers; dsDNA enters through RuvA and exits via RuvB. An RuvB hexamer assembles on each DNA strand where it exits the tetramer. Each RuvB hexamer is contacted by two RuvA subunits (via domain III) on 2 adjacent RuvB subunits; this complex drives branch migration. In the full resolvosome a probable DNA-RuvA(4)-RuvB(12)-RuvC(2) complex forms which resolves the HJ.

It localises to the cytoplasm. The catalysed reaction is ATP + H2O = ADP + phosphate + H(+). Functionally, the RuvA-RuvB-RuvC complex processes Holliday junction (HJ) DNA during genetic recombination and DNA repair, while the RuvA-RuvB complex plays an important role in the rescue of blocked DNA replication forks via replication fork reversal (RFR). RuvA specifically binds to HJ cruciform DNA, conferring on it an open structure. The RuvB hexamer acts as an ATP-dependent pump, pulling dsDNA into and through the RuvAB complex. RuvB forms 2 homohexamers on either side of HJ DNA bound by 1 or 2 RuvA tetramers; 4 subunits per hexamer contact DNA at a time. Coordinated motions by a converter formed by DNA-disengaged RuvB subunits stimulates ATP hydrolysis and nucleotide exchange. Immobilization of the converter enables RuvB to convert the ATP-contained energy into a lever motion, pulling 2 nucleotides of DNA out of the RuvA tetramer per ATP hydrolyzed, thus driving DNA branch migration. The RuvB motors rotate together with the DNA substrate, which together with the progressing nucleotide cycle form the mechanistic basis for DNA recombination by continuous HJ branch migration. Branch migration allows RuvC to scan DNA until it finds its consensus sequence, where it cleaves and resolves cruciform DNA. This chain is Holliday junction branch migration complex subunit RuvB, found in Bartonella henselae (strain ATCC 49882 / DSM 28221 / CCUG 30454 / Houston 1) (Rochalimaea henselae).